We begin with the raw amino-acid sequence, 117 residues long: Large ribosomal subunit protein bL20 (117 aa).

It belongs to the bacterial ribosomal protein bL20 family.

In terms of biological role, binds directly to 23S ribosomal RNA and is necessary for the in vitro assembly process of the 50S ribosomal subunit. It is not involved in the protein synthesizing functions of that subunit. The protein is Large ribosomal subunit protein bL20 of Idiomarina loihiensis (strain ATCC BAA-735 / DSM 15497 / L2-TR).